A 536-amino-acid polypeptide reads, in one-letter code: CUGBP Elav-like family member 2 (536 aa).

RRM domains are found at residues 58–141 (IKMF…PADS), 150–230 (RKLF…FADT), and 451–529 (ANLF…LKRS).

Belongs to the CELF/BRUNOL family.

It localises to the nucleus. It is found in the cytoplasm. In terms of biological role, RNA-binding protein implicated in the regulation of several post-transcriptional events. May be involved in pre-mRNA alternative splicing, mRNA translation repression and stability. This is CUGBP Elav-like family member 2 (celf2) from Xenopus laevis (African clawed frog).